Reading from the N-terminus, the 282-residue chain is Heme oxygenase 1, chloroplastic (282 aa).

A chloroplast-targeting transit peptide spans 1–56; that stretch reads MASATVVSQIQSLYIIKPRLSPPPPPHRQFRSIYFPTTRLLQQHRFRQMKSVVIVP. His86 provides a ligand contact to heme b.

The protein belongs to the heme oxygenase family. Highly expressed in root nodules and, to a lower extent, in leaves, shoots, roots, flowers and pods (at protein level).

It localises to the plastid. Its subcellular location is the chloroplast. It carries out the reaction heme b + 3 reduced [NADPH--hemoprotein reductase] + 3 O2 = biliverdin IXalpha + CO + Fe(2+) + 3 oxidized [NADPH--hemoprotein reductase] + 3 H2O + H(+). Functionally, key enzyme in the synthesis of the chromophore of the phytochrome family of plant photoreceptors. Catalyzes the opening of the heme ring to form the open-chain tetrapyrrole biliverdin IX with the release of iron and carbon monoxide (CO). Produces specifically the biliverdin IX-alpha isomer. Can form complex with heme, is ferredoxin-dependent and its activity is increased in the presence of ascorbate. May affect the plastid-to-nucleus signaling pathway by perturbing tetrapyrrole synthesis. The plastid-to-nucleus signal plays an important role in the coordinated expression of both nuclear- and chloroplast-localized genes that encode photosynthesis-related proteins. Required for efficient symbiotic nitrogen fixation (SNF) in root nodules. Responsible for heme catabolism in uninfected nodule interstitial cells (UC), preventing superoxide production under stressful conditions (e.g. nitrate exposure and darkness) and catalyzing biliverdin (BV) production in senescing green nodules. The protein is Heme oxygenase 1, chloroplastic of Lotus japonicus (Lotus corniculatus var. japonicus).